The following is a 185-amino-acid chain: Adenine phosphoribosyltransferase (185 aa).

It belongs to the purine/pyrimidine phosphoribosyltransferase family. In terms of assembly, homodimer.

It is found in the cytoplasm. The catalysed reaction is AMP + diphosphate = 5-phospho-alpha-D-ribose 1-diphosphate + adenine. It participates in purine metabolism; AMP biosynthesis via salvage pathway; AMP from adenine: step 1/1. Catalyzes a salvage reaction resulting in the formation of AMP, that is energically less costly than de novo synthesis. The polypeptide is Adenine phosphoribosyltransferase (Pectobacterium atrosepticum (strain SCRI 1043 / ATCC BAA-672) (Erwinia carotovora subsp. atroseptica)).